Here is a 273-residue protein sequence, read N- to C-terminus: Large ribosomal subunit protein uL2 (273 aa).

Residues 228-273 (VDHPHGGGEGKTSGGRHPVTPWGFPTKGKKTRKNKRTSKFIVKKRK) form a disordered region. Residues 254–273 (KGKKTRKNKRTSKFIVKKRK) show a composition bias toward basic residues.

It belongs to the universal ribosomal protein uL2 family. In terms of assembly, part of the 50S ribosomal subunit. Forms a bridge to the 30S subunit in the 70S ribosome.

Its function is as follows. One of the primary rRNA binding proteins. Required for association of the 30S and 50S subunits to form the 70S ribosome, for tRNA binding and peptide bond formation. It has been suggested to have peptidyltransferase activity; this is somewhat controversial. Makes several contacts with the 16S rRNA in the 70S ribosome. The protein is Large ribosomal subunit protein uL2 of Rickettsia peacockii (strain Rustic).